Consider the following 132-residue polypeptide: Agouti-signaling protein (132 aa).

Residues 1–22 (MDVTRLLLATLLVFLCFFTAYS) form the signal peptide. N-linked (GlcNAc...) asparagine glycosylation occurs at asparagine 39. Residues 58–88 (KSKQMSRKEAEKKRSSKKEASMKKVARPRTP) are disordered. Residues 63–79 (SRKEAEKKRSSKKEASM) show a composition bias toward basic and acidic residues. Intrachain disulfides connect cysteine 93-cysteine 108, cysteine 100-cysteine 114, cysteine 107-cysteine 125, cysteine 111-cysteine 132, and cysteine 116-cysteine 123. Residues 93–132 (CVATRDSCKPPAPACCDPCASCQCRFFRSACSCRVLSLNC) form the Agouti domain.

It is found in the secreted. Its function is as follows. Involved in the regulation of melanogenesis. The binding of ASP to MC1R precludes alpha-MSH initiated signaling and thus blocks production of cAMP, leading to a down-regulation of eumelanogenesis (brown/black pigment) and thus increasing synthesis of pheomelanin (yellow/red pigment). The protein is Agouti-signaling protein (ASIP) of Cercopithecus mitis (Blue monkey).